The primary structure comprises 178 residues: Large ribosomal subunit protein uL6 (178 aa).

It belongs to the universal ribosomal protein uL6 family. As to quaternary structure, part of the 50S ribosomal subunit.

Functionally, this protein binds to the 23S rRNA, and is important in its secondary structure. It is located near the subunit interface in the base of the L7/L12 stalk, and near the tRNA binding site of the peptidyltransferase center. The protein is Large ribosomal subunit protein uL6 of Coxiella burnetii (strain CbuK_Q154) (Coxiella burnetii (strain Q154)).